The primary structure comprises 413 residues: SET and MYND domain-containing protein DDB_G0273591 (413 aa).

Residues Asp-6–Leu-311 form the SET domain. The segment at Cys-51–Cys-95 adopts an MYND-type zinc-finger fold. The disordered stretch occupies residues Asp-205–Asn-232. A coiled-coil region spans residues Asn-216–Arg-243.

Belongs to the class V-like SAM-binding methyltransferase superfamily.

Its function is as follows. Probable methyltransferase. This is SET and MYND domain-containing protein DDB_G0273591 from Dictyostelium discoideum (Social amoeba).